We begin with the raw amino-acid sequence, 170 residues long: NADH-quinone oxidoreductase subunit B (170 aa).

The [4Fe-4S] cluster site is built by Cys37, Cys38, Cys102, and Cys131.

The protein belongs to the complex I 20 kDa subunit family. In terms of assembly, NDH-1 is composed of 14 different subunits. Subunits NuoB, C, D, E, F, and G constitute the peripheral sector of the complex. The cofactor is [4Fe-4S] cluster.

The protein resides in the cell inner membrane. The enzyme catalyses a quinone + NADH + 5 H(+)(in) = a quinol + NAD(+) + 4 H(+)(out). Functionally, NDH-1 shuttles electrons from NADH, via FMN and iron-sulfur (Fe-S) centers, to quinones in the respiratory chain. The immediate electron acceptor for the enzyme in this species is believed to be ubiquinone. Couples the redox reaction to proton translocation (for every two electrons transferred, four hydrogen ions are translocated across the cytoplasmic membrane), and thus conserves the redox energy in a proton gradient. The sequence is that of NADH-quinone oxidoreductase subunit B from Citrifermentans bemidjiense (strain ATCC BAA-1014 / DSM 16622 / JCM 12645 / Bem) (Geobacter bemidjiensis).